We begin with the raw amino-acid sequence, 631 residues long: Serine/threonine-protein kinase PLK3 (631 aa).

Residues 1-59 (MEPAAGFLSPRPFPRAAVPSAPPAGPGPPANASPRSEPEVLAGPRAPDPPGRLITDPLS) form a disordered region. Over residues 20–31 (SAPPAGPGPPAN) the composition is skewed to pro residues. Positions 63–315 (YTKGRLLGKG…IEQILRHDFF (253 aa)) constitute a Protein kinase domain. Residues 69-77 (LGKGGFARC) and K92 contribute to the ATP site. D186 (proton acceptor) is an active-site residue. POLO box domains lie at 448 to 526 (WVSK…YMEQ) and 547 to 630 (LLLQ…DQSP).

The protein belongs to the protein kinase superfamily. Ser/Thr protein kinase family. CDC5/Polo subfamily. In terms of assembly, interacts (via the POLO-box domain) with CIB1; leading to inhibit PLK3 kinase activity. Interacts with GOLGB1. Post-translationally, phosphorylated in an ATM-dependent manner following DNA damage. Phosphorylated as cells enter mitosis and dephosphorylated as cells exit mitosis. Expressed in skin.

The protein resides in the cytoplasm. It localises to the nucleus. The protein localises to the nucleolus. Its subcellular location is the golgi apparatus. It is found in the cytoskeleton. The protein resides in the microtubule organizing center. It localises to the centrosome. It catalyses the reaction L-seryl-[protein] + ATP = O-phospho-L-seryl-[protein] + ADP + H(+). The catalysed reaction is L-threonyl-[protein] + ATP = O-phospho-L-threonyl-[protein] + ADP + H(+). Its function is as follows. Serine/threonine-protein kinase involved in cell cycle regulation, response to stress and Golgi disassembly. Polo-like kinases act by binding and phosphorylating proteins that are already phosphorylated on a specific motif recognized by the POLO box domains. Phosphorylates ATF2, BCL2L1, CDC25A, CDC25C, CHEK2, HIF1A, JUN, p53/TP53, p73/TP73, PTEN, TOP2A and VRK1. Involved in cell cycle regulation: required for entry into S phase and cytokinesis. Phosphorylates BCL2L1, leading to regulate the G2 checkpoint and progression to cytokinesis during mitosis. Plays a key role in response to stress: rapidly activated upon stress stimulation, such as ionizing radiation, reactive oxygen species (ROS), hyperosmotic stress, UV irradiation and hypoxia. Involved in DNA damage response and G1/S transition checkpoint by phosphorylating CDC25A, p53/TP53 and p73/TP73. Phosphorylates p53/TP53 in response to reactive oxygen species (ROS), thereby promoting p53/TP53-mediated apoptosis. Phosphorylates CHEK2 in response to DNA damage, promoting the G2/M transition checkpoint. Phosphorylates the transcription factor p73/TP73 in response to DNA damage, leading to inhibit p73/TP73-mediated transcriptional activation and pro-apoptotic functions. Phosphorylates HIF1A and JUN is response to hypoxia. Phosphorylates ATF2 following hyperosmotic stress in corneal epithelium. Also involved in Golgi disassembly during the cell cycle: part of a MEK1/MAP2K1-dependent pathway that induces Golgi fragmentation during mitosis by mediating phosphorylation of VRK1. May participate in endomitotic cell cycle, a form of mitosis in which both karyokinesis and cytokinesis are interrupted and is a hallmark of megakaryocyte differentiation, via its interaction with CIB1. In Mus musculus (Mouse), this protein is Serine/threonine-protein kinase PLK3 (Plk3).